Reading from the N-terminus, the 224-residue chain is uncharacterized protein (224 aa).

This is an uncharacterized protein from Mycobacterium tuberculosis (strain CDC 1551 / Oshkosh).